Consider the following 561-residue polypeptide: Urocanate hydratase (561 aa).

NAD(+)-binding positions include 52–53, Gln130, 176–178, Glu196, Arg201, 242–243, 263–267, 273–274, and Tyr322; these read GG, GMG, NA, QTSAH, and YL. The active site involves Cys410. Residue Gly492 coordinates NAD(+).

This sequence belongs to the urocanase family. It depends on NAD(+) as a cofactor.

It localises to the cytoplasm. The catalysed reaction is 4-imidazolone-5-propanoate = trans-urocanate + H2O. It participates in amino-acid degradation; L-histidine degradation into L-glutamate; N-formimidoyl-L-glutamate from L-histidine: step 2/3. Catalyzes the conversion of urocanate to 4-imidazolone-5-propionate. This chain is Urocanate hydratase, found in Salmonella agona (strain SL483).